The sequence spans 396 residues: DNA polymerase IV (396 aa).

The region spanning 2 to 182 (ILHVDMDAFY…LPVSRLWGVG (181 aa)) is the UmuC domain. Mg(2+) is bound by residues D6 and D100. The active site involves E101.

The protein belongs to the DNA polymerase type-Y family. As to quaternary structure, monomer. Requires Mg(2+) as cofactor.

It localises to the cytoplasm. The catalysed reaction is DNA(n) + a 2'-deoxyribonucleoside 5'-triphosphate = DNA(n+1) + diphosphate. Poorly processive, error-prone DNA polymerase involved in untargeted mutagenesis. Copies undamaged DNA at stalled replication forks, which arise in vivo from mismatched or misaligned primer ends. These misaligned primers can be extended by PolIV. Exhibits no 3'-5' exonuclease (proofreading) activity. May be involved in translesional synthesis, in conjunction with the beta clamp from PolIII. The chain is DNA polymerase IV from Rhodopirellula baltica (strain DSM 10527 / NCIMB 13988 / SH1).